The primary structure comprises 637 residues: Phospholipase B (637 aa).

A signal peptide spans 1–19; it reads MSIATATFAFSLFATIAFA. A PLA2c domain is found at 46–572; it reads DCPSNVTWIR…DTWCWAGDDN (527 aa). N-linked (GlcNAc...) asparagine glycans are attached at residues N50, N56, N122, N231, N246, N272, N314, N343, N387, N433, N481, N501, N528, N553, N572, N594, and N606.

It belongs to the lysophospholipase family. N-glycosylated.

Its subcellular location is the secreted. It localises to the cell membrane. It carries out the reaction a 1-acyl-sn-glycero-3-phosphocholine + H2O = sn-glycerol 3-phosphocholine + a fatty acid + H(+). With respect to regulation, inhibited by Fe(3+) ion. In terms of biological role, exhibits phospholipase B (PLB), lysophospholipase (LPL) and lysophospholipase/transacylase (LPTA) activities. The polypeptide is Phospholipase B (PLB1) (Cryptococcus neoformans var. grubii serotype A (strain H99 / ATCC 208821 / CBS 10515 / FGSC 9487) (Filobasidiella neoformans var. grubii)).